The primary structure comprises 366 residues: Homer protein homolog 1 (366 aa).

One can recognise a WH1 domain in the interval 1-110; it reads MGEQPIFSTR…EKFQEFKEAA (110 aa). Glycine 2 bears the N-acetylglycine mark. The interval 114–189 is disordered; sequence KEKSQEKMEL…RTQGLSHASS (76 aa). Residues 138-147 show a composition bias toward polar residues; the sequence is SPLTPESING. Residues 193–364 adopt a coiled-coil conformation; it reads KHWEAELATL…LRDNLAKLLE (172 aa). The required for tetramerization stretch occupies residues 302–366; that stretch reads KLQEVEIRNK…DNLAKLLECS (65 aa). Serine 318 bears the Phosphoserine mark.

Belongs to the Homer family. In terms of assembly, tetramer; this tetrameric structure is critical for forming the high-order complex with SHANK1, which in turn is necessary for the structural and functional integrity of dendritic spines. Interacts with GRM1, GRM5, ITPR1, DYN3, RYR1, RYR2 and SHANK3. Interacts with IFT57 and OPHN1. Isoform 1 and isoform 2 encode coiled-coil structures that mediate homo- and heteromultimerization. Interacts with SHANK1; forms high-order polymerized complex with a mesh-like network structure, at least composed of SHANK1, HOMER1 and DLGAP1; the complex formation is SHANK1 multimerization dependent. Interacts with NFATC4. Interacts with DAGLA (via PPXXF motif); this interaction is required for the cell membrane localization of DAGLA. Interacts with SRGAP2. Highly expressed in cortex, Purkinje cells of the cerebellum, hippocampus, striatum and olfactory bulb. Isoform 1 and isoform 3 are expressed in skeletal and cardiac muscle.

It is found in the cytoplasm. Its subcellular location is the postsynaptic density. The protein localises to the synapse. It localises to the cell projection. The protein resides in the dendritic spine. Its function is as follows. Postsynaptic density scaffolding protein. Binds and cross-links cytoplasmic regions of GRM1, GRM5, ITPR1, DNM3, RYR1, RYR2, SHANK1 and SHANK3. By physically linking GRM1 and GRM5 with ER-associated ITPR1 receptors, it aids the coupling of surface receptors to intracellular calcium release. May also couple GRM1 to PI3 kinase through its interaction with AGAP2. Differentially regulates the functions of the calcium activated channel ryanodine receptors RYR1 and RYR2. Isoform 1 decreases the activity of RYR2, and increases the activity of RYR1, whereas isoform 3 counteracts the effects by competing for binding sites. Isoform 1 regulates the trafficking and surface expression of GRM5. Isoform 3 acts as a natural dominant negative, in dynamic competition with constitutively expressed isoform 1, and isoform 2 to regulate synaptic metabotropic glutamate function. Isoform 3, may be involved in the structural changes that occur at synapses during long-lasting neuronal plasticity and development. Forms a high-order complex with SHANK1, which in turn is necessary for the structural and functional integrity of dendritic spines. Negatively regulates T cell activation by inhibiting the calcineurin-NFAT pathway. Acts by competing with calcineurin/PPP3CA for NFAT protein binding, hence preventing NFAT activation by PPP3CA. In Rattus norvegicus (Rat), this protein is Homer protein homolog 1.